Consider the following 188-residue polypeptide: Protein GrpE (188 aa).

A disordered region spans residues 1–30; sequence MTKKTSHHKAEQKEKRAGEESGRESEVLDH. Over residues 8 to 30 the composition is skewed to basic and acidic residues; the sequence is HKAEQKEKRAGEESGRESEVLDH.

The protein belongs to the GrpE family. Homodimer.

Its subcellular location is the cytoplasm. Participates actively in the response to hyperosmotic and heat shock by preventing the aggregation of stress-denatured proteins, in association with DnaK and GrpE. It is the nucleotide exchange factor for DnaK and may function as a thermosensor. Unfolded proteins bind initially to DnaJ; upon interaction with the DnaJ-bound protein, DnaK hydrolyzes its bound ATP, resulting in the formation of a stable complex. GrpE releases ADP from DnaK; ATP binding to DnaK triggers the release of the substrate protein, thus completing the reaction cycle. Several rounds of ATP-dependent interactions between DnaJ, DnaK and GrpE are required for fully efficient folding. The polypeptide is Protein GrpE (Chlorobium phaeobacteroides (strain BS1)).